The chain runs to 165 residues: Transcriptional repressor NrdR (165 aa).

The segment at 3–34 (CPYCGQLNNRVVDSRLSRSEFAVRRRRECLDC) is a zinc-finger region. Positions 49–139 (VMVVKKDGRR…VYREFKDVDD (91 aa)) constitute an ATP-cone domain.

The protein belongs to the NrdR family. It depends on Zn(2+) as a cofactor.

Its function is as follows. Negatively regulates transcription of bacterial ribonucleotide reductase nrd genes and operons by binding to NrdR-boxes. The chain is Transcriptional repressor NrdR from Desulforapulum autotrophicum (strain ATCC 43914 / DSM 3382 / VKM B-1955 / HRM2) (Desulfobacterium autotrophicum).